The following is a 605-amino-acid chain: NADH-ubiquinone oxidoreductase chain 5 (605 aa).

16 helical membrane passes run 11 to 31 (ILIT…LPPI), 49 to 69 (LSLT…ISSL), 77 to 97 (LAMS…ALFI), 120 to 140 (MFLL…NFFP), 141 to 161 (MLVG…WWHG), 178 to 198 (LADI…SSLD), 202 to 222 (FFAT…MAAM), 244 to 264 (VSAL…LIGM), 273 to 295 (GFSE…KALL), 302 to 322 (IIAF…GLNH), 325 to 345 (LAFM…LCAG), 371 to 391 (ASCF…TGFF), 408 to 425 (LWAT…IYSL), 457 to 477 (LALA…PIYT), 488 to 508 (LAAL…ISLA), and 584 to 604 (IKTY…IMLF).

It belongs to the complex I subunit 5 family.

The protein localises to the mitochondrion inner membrane. The catalysed reaction is a ubiquinone + NADH + 5 H(+)(in) = a ubiquinol + NAD(+) + 4 H(+)(out). Core subunit of the mitochondrial membrane respiratory chain NADH dehydrogenase (Complex I) that is believed to belong to the minimal assembly required for catalysis. Complex I functions in the transfer of electrons from NADH to the respiratory chain. The immediate electron acceptor for the enzyme is believed to be ubiquinone. The chain is NADH-ubiquinone oxidoreductase chain 5 (MT-ND5) from Pelomedusa subrufa (African side-necked turtle).